Reading from the N-terminus, the 619-residue chain is Frizzled and smoothened-like protein L (619 aa).

The signal sequence occupies residues 1 to 24 (MITNKSKYYFFLILIFINFYLINC). Asparagine 4, asparagine 63, asparagine 112, asparagine 143, asparagine 159, asparagine 184, and asparagine 203 each carry an N-linked (GlcNAc...) asparagine glycan. The Extracellular portion of the chain corresponds to 25 to 245 (QEEYPIDQTG…KQWDRLYDLS (221 aa)). One can recognise an FZ domain in the interval 31 to 169 (DQTGKCEPYI…YSIYDLSLVN (139 aa)). Cystine bridges form between cysteine 36–cysteine 106 and cysteine 48–cysteine 99. The chain crosses the membrane as a helical span at residues 246 to 266 (NSLSVLSCVGTLFLLFTFNIL). Residues 267–278 (NKKINRFDRMNS) are Cytoplasmic-facing. The chain crosses the membrane as a helical span at residues 279 to 299 (LFNGSVFMMSLSGVIILFAGG). Over 300–321 (PRALIKDGGARISVWQDPLCSA) the chain is Extracellular. A helical membrane pass occupies residues 322-342 (TGFIFQLFSIAAILFWVVMSF). Residues 343-358 (ELWYKIKFMTKKLDLK) lie on the Cytoplasmic side of the membrane. Residues 359-379 (KYYIPFIIIVSLVFSIIPLAT) traverse the membrane as a helical segment. Residues 380–402 (KNYRMIRGNMHCWVHTTKLQNSL) are Extracellular-facing. The helical transmembrane segment at 403–423 (FWIPLGIAITIGTIFIGLVMF) threads the bilayer. Residues 424 to 444 (EIHRIVSANSKGGVLKLEIKS) are Cytoplasmic-facing. A helical transmembrane segment spans residues 445 to 465 (ILNVALIYLTFIYLFAFNFYM). The Extracellular segment spans residues 466 to 497 (NGQEGVVYGQIESFYQCTLENDASECTIQGPS). Residues 498–518 (IGSLGFFIFCIRIYGVYCFIL) traverse the membrane as a helical segment. Residues 519 to 619 (QGLNYRAYNI…TLKDIEVSKS (101 aa)) lie on the Cytoplasmic side of the membrane. The tract at residues 581–605 (LNIDSAFSKNNESDDEDDYDPYKKS) is disordered.

This sequence belongs to the G-protein coupled receptor Fz/Smo family.

Its subcellular location is the membrane. In Dictyostelium discoideum (Social amoeba), this protein is Frizzled and smoothened-like protein L (fslL).